A 423-amino-acid polypeptide reads, in one-letter code: Lipoyl synthase 1, mitochondrial (423 aa).

Cys-127, Cys-132, Cys-138, Cys-159, Cys-163, Cys-166, and Ser-375 together coordinate [4Fe-4S] cluster. The Radical SAM core domain occupies 142–364; it reads DEEEGTATAT…EEEAMAMGFL (223 aa).

The protein belongs to the radical SAM superfamily. Lipoyl synthase family. The cofactor is [4Fe-4S] cluster.

It localises to the mitochondrion. It catalyses the reaction [[Fe-S] cluster scaffold protein carrying a second [4Fe-4S](2+) cluster] + N(6)-octanoyl-L-lysyl-[protein] + 2 oxidized [2Fe-2S]-[ferredoxin] + 2 S-adenosyl-L-methionine + 4 H(+) = [[Fe-S] cluster scaffold protein] + N(6)-[(R)-dihydrolipoyl]-L-lysyl-[protein] + 4 Fe(3+) + 2 hydrogen sulfide + 2 5'-deoxyadenosine + 2 L-methionine + 2 reduced [2Fe-2S]-[ferredoxin]. It functions in the pathway protein modification; protein lipoylation via endogenous pathway; protein N(6)-(lipoyl)lysine from octanoyl-[acyl-carrier-protein]: step 2/2. In terms of biological role, catalyzes the radical-mediated insertion of two sulfur atoms into the C-6 and C-8 positions of the octanoyl moiety bound to the lipoyl domains of lipoate-dependent enzymes, thereby converting the octanoylated domains into lipoylated derivatives. This chain is Lipoyl synthase 1, mitochondrial, found in Trypanosoma cruzi (strain CL Brener).